A 181-amino-acid chain; its full sequence is Translation initiation factor IF-3, chloroplastic (181 aa).

Belongs to the IF-3 family. Monomer.

Its subcellular location is the plastid. The protein resides in the chloroplast. In terms of biological role, IF-3 binds to the 30S ribosomal subunit and shifts the equilibrium between 70S ribosomes and their 50S and 30S subunits in favor of the free subunits, thus enhancing the availability of 30S subunits on which protein synthesis initiation begins. The polypeptide is Translation initiation factor IF-3, chloroplastic (Galdieria sulphuraria (Red alga)).